The sequence spans 428 residues: 3-phosphoshikimate 1-carboxyvinyltransferase (428 aa).

3-phosphoshikimate-binding residues include Lys21, Ser22, and Arg26. Phosphoenolpyruvate is bound at residue Lys21. Positions 91 and 119 each coordinate phosphoenolpyruvate. 3-phosphoshikimate contacts are provided by Ser164, Gln166, Asp311, and Lys338. Gln166 serves as a coordination point for phosphoenolpyruvate. Asp311 acts as the Proton acceptor in catalysis. Phosphoenolpyruvate contacts are provided by Arg342 and Arg383.

This sequence belongs to the EPSP synthase family. Monomer.

Its subcellular location is the cytoplasm. It carries out the reaction 3-phosphoshikimate + phosphoenolpyruvate = 5-O-(1-carboxyvinyl)-3-phosphoshikimate + phosphate. It functions in the pathway metabolic intermediate biosynthesis; chorismate biosynthesis; chorismate from D-erythrose 4-phosphate and phosphoenolpyruvate: step 6/7. In terms of biological role, catalyzes the transfer of the enolpyruvyl moiety of phosphoenolpyruvate (PEP) to the 5-hydroxyl of shikimate-3-phosphate (S3P) to produce enolpyruvyl shikimate-3-phosphate and inorganic phosphate. The chain is 3-phosphoshikimate 1-carboxyvinyltransferase from Campylobacter concisus (strain 13826).